The following is a 325-amino-acid chain: Apoptosis-enhancing nuclease (325 aa).

The short motif at 27-35 (RKRHKRRSR) is the Nucleolar localization signal element. Residues 85–105 (RAGSGSAPCSRRPAPGKASGP) are disordered. Residues 110-266 (CVAIDCEMVG…EDATTAMELY (157 aa)) enclose the Exonuclease domain. The Nuclear localization signal motif lies at 165–188 (RQHMRKAVPFQVAQKEILKLLKGK). The disordered stretch occupies residues 281-325 (LWTCPEDREPDSSTDMEQYMEDQYWPDDLAHGSRGGAREAQDRRN). The span at 308-325 (DLAHGSRGGAREAQDRRN) shows a compositional bias: basic and acidic residues.

The protein localises to the nucleus. It localises to the nucleolus. Exonuclease with activity against single- and double-stranded DNA and RNA. Mediates p53-induced apoptosis. When induced by p53 following DNA damage, digests double-stranded DNA to form single-stranded DNA and amplifies DNA damage signals, leading to enhancement of apoptosis. The chain is Apoptosis-enhancing nuclease (AEN) from Homo sapiens (Human).